Here is a 149-residue protein sequence, read N- to C-terminus: MSKTLSFKTYSAKPAEVERTWYVIDAEGLVLGRMASEIAKVLRGKHKPQFTPHIDTGDFIVVTNAEKVLLTGRKSEQKTYFTHSHYPGGVRIDEVKDVIRTKPERVIENAVWGMLPHNNLGRQLFRKLKVYAGTNHPHASQSPIEMKIN.

Belongs to the universal ribosomal protein uL13 family. As to quaternary structure, part of the 50S ribosomal subunit.

Functionally, this protein is one of the early assembly proteins of the 50S ribosomal subunit, although it is not seen to bind rRNA by itself. It is important during the early stages of 50S assembly. The polypeptide is Large ribosomal subunit protein uL13 (Chlorobium chlorochromatii (strain CaD3)).